The primary structure comprises 143 residues: Large ribosomal subunit protein uL15 (143 aa).

The protein belongs to the universal ribosomal protein uL15 family. As to quaternary structure, part of the 50S ribosomal subunit.

Binds to the 23S rRNA. The sequence is that of Large ribosomal subunit protein uL15 from Methanococcus aeolicus (strain ATCC BAA-1280 / DSM 17508 / OCM 812 / Nankai-3).